The sequence spans 148 residues: 3-dehydroquinate dehydratase (148 aa).

Y23 acts as the Proton acceptor in catalysis. N75, H81, and D88 together coordinate substrate. H101 serves as the catalytic Proton donor. Substrate is bound by residues 102 to 103 (LS) and R112.

The protein belongs to the type-II 3-dehydroquinase family. In terms of assembly, homododecamer.

It catalyses the reaction 3-dehydroquinate = 3-dehydroshikimate + H2O. Its pathway is metabolic intermediate biosynthesis; chorismate biosynthesis; chorismate from D-erythrose 4-phosphate and phosphoenolpyruvate: step 3/7. Catalyzes a trans-dehydration via an enolate intermediate. This is 3-dehydroquinate dehydratase from Xanthomonas campestris pv. campestris (strain B100).